Reading from the N-terminus, the 104-residue chain is MAANPSGQGFQNKNRVAILAELDKEKRKLLMQNQSSTSHPGASISLSRPSLTKDFRDHAEQQHIAAQQKAALQHAHAHSSGYFITQDSAFGNLILPVLPRLDPE.

Ala-2 bears the N-acetylalanine mark. A Phosphoserine modification is found at Ser-50.

Belongs to the SOSS-C family. Component of the SOSS complex, composed of SOSS-B (SOSS-B1/NABP2 or SOSS-B2/NABP1), SOSS-A/INTS3 and SOSS-C/INIP. SOSS complexes containing SOSS-B1/NABP2 are more abundant than complexes containing SOSS-B2/NABP1. Interacts with INTS3; the interaction is direct.

It is found in the nucleus. Functionally, component of the SOSS complex, a multiprotein complex that functions downstream of the MRN complex to promote DNA repair and G2/M checkpoint. The SOSS complex associates with single-stranded DNA at DNA lesions and influences diverse endpoints in the cellular DNA damage response including cell-cycle checkpoint activation, recombinational repair and maintenance of genomic stability. Required for efficient homologous recombination-dependent repair of double-strand breaks (DSBs) and ATM-dependent signaling pathways. The protein is SOSS complex subunit C (Inip) of Mus musculus (Mouse).